Here is a 102-residue protein sequence, read N- to C-terminus: Large ribosomal subunit protein bL21 (102 aa).

The protein belongs to the bacterial ribosomal protein bL21 family. In terms of assembly, part of the 50S ribosomal subunit. Contacts protein L20.

In terms of biological role, this protein binds to 23S rRNA in the presence of protein L20. The protein is Large ribosomal subunit protein bL21 of Azorhizobium caulinodans (strain ATCC 43989 / DSM 5975 / JCM 20966 / LMG 6465 / NBRC 14845 / NCIMB 13405 / ORS 571).